The chain runs to 173 residues: Helix-loop-helix protein lin-22 (173 aa).

A basic motif region spans residues 21–34; sequence KKIKNKPLMEKKRR. Positions 21 to 78 constitute a bHLH domain; it reads KKIKNKPLMEKKRRARINKSLSQLKQILIQDEHKNSIQHSKWEKADILEMAVEYLQQL. Positions 35–78 are helix-loop-helix motif; that stretch reads ARINKSLSQLKQILIQDEHKNSIQHSKWEKADILEMAVEYLQQL. Positions 83-95 are enriched in low complexity; it reads PCSLSPSTSSIST. Residues 83-102 are disordered; sequence PCSLSPSTSSISTPPTPKEE.

In terms of tissue distribution, expressed mostly in the seam (stem) cells and hypodermis (hyp7), but also to a lesser extent in the intestine.

The protein localises to the nucleus. In terms of biological role, probable transcription factor. During development, required for cell fate specification, probably by promoting or repressing expression of genes involved in specific cell fate. Involved in specifying lineages derived from the epidermal stem cells of the lateral ectoderm, known as seam cells. Modulates symmetric divisions of seam cells, perhaps in concert with the Wnt signaling pathway. May repress expression of homeobox genes mab-5, egl-5 and lin-39. The protein is Helix-loop-helix protein lin-22 of Caenorhabditis elegans.